Consider the following 273-residue polypeptide: Vacuolar iron transporter (273 aa).

Residues 1 to 47 (MGKQKIIDARKAYYEGDIEKSKEIHSHYHNLDKHAEHHSLDKDHLKT) are Cytoplasmic-facing. Residues 48-68 (IIFGSLDGIITIFAIVSGCVG) form a helical membrane-spanning segment. Residues 69-72 (ANIT) are Vacuolar-facing. A helical transmembrane segment spans residues 73-93 (PAQVIIIGVGNLFANAISMGF). At 94-181 (SEYTSSTAQI…NEDKSEAFKK (88 aa)) the chain is on the cytoplasmic side. 6 residues coordinate Fe cation: Glu113, Glu116, Glu124, Glu127, Met161, and Glu165. A helical membrane pass occupies residues 182 to 202 (GILMFLSFCFFGMIPLFSYVL). The Vacuolar segment spans residues 203–212 (YNLFFSAENY). Residues 213 to 233 (TSSFAVVFISTLITLFILGLF) form a helical membrane-spanning segment. Topologically, residues 234 to 246 (KSQFTTQKPIVCA) are cytoplasmic. A helical membrane pass occupies residues 247–267 (LSMVLNGSIAGMLPFLFGVLL). Over 268 to 273 (KTNSGD) the chain is Vacuolar.

Belongs to the CCC1 family. As to quaternary structure, monomer.

The protein localises to the vacuole membrane. It localises to the endoplasmic reticulum membrane. It carries out the reaction Fe(2+)(in) = Fe(2+)(out). In terms of biological role, vacuolar iron transporter involved in the transfer of iron ions from the cytosol to the vacuole for intracellular iron storage. Involved in detoxification of excess iron. The transport mechanism is not well defined and the role of protons is not clear. This chain is Vacuolar iron transporter, found in Plasmodium berghei (strain Anka).